The following is a 145-amino-acid chain: UPF0179 protein Maeo_1037 (145 aa).

It belongs to the UPF0179 family.

The sequence is that of UPF0179 protein Maeo_1037 from Methanococcus aeolicus (strain ATCC BAA-1280 / DSM 17508 / OCM 812 / Nankai-3).